Consider the following 299-residue polypeptide: Apolipoprotein E (299 aa).

The N-terminal stretch at 1–18 is a signal peptide; the sequence is MKVLWAVLVVTLLAGCRA. A run of 7 repeats spans residues 74–95, 96–117, 118–139, 140–161, 162–183, 184–205, and 224–245. The tract at residues 74–245 is 8 X 22 AA approximate tandem repeats; that stretch reads LLMEDTMKEV…RLDVVREQME (172 aa). Met-137 is modified (methionine sulfoxide). A Phosphoserine modification is found at Ser-141. Residues 152-162 are LDL and other lipoprotein receptors binding; it reads HLRKMRKRLLR. 156–159 contacts heparin; the sequence is MRKR. Positions 204 to 273 are lipid-binding and lipoprotein association; sequence SALTSQPLRE…GWFEPMVEDM (70 aa). 219 to 226 contributes to the heparin binding site; the sequence is GERLRGRL. The specificity for association with VLDL stretch occupies residues 261–273; sequence RLKGWFEPMVEDM.

This sequence belongs to the apolipoprotein A1/A4/E family. As to quaternary structure, homotetramer. May interact with ABCA1; functionally associated with ABCA1 in the biogenesis of HDLs. May interact with APP/A4 amyloid-beta peptide; the interaction is extremely stable in vitro but its physiological significance is unclear. May interact with MAPT. May interact with MAP2. In the cerebrospinal fluid, interacts with secreted SORL1. Interacts with PMEL; this allows the loading of PMEL luminal fragment on ILVs to induce fibril nucleation. Post-translationally, APOE exists as multiple glycosylated and sialylated glycoforms within cells and in plasma. The extent of glycosylation and sialylation are tissue and context specific. In terms of processing, glycated in plasma VLDL. Phosphorylated by FAM20C in the extracellular medium.

Its subcellular location is the secreted. The protein resides in the extracellular space. The protein localises to the extracellular matrix. It is found in the extracellular vesicle. It localises to the endosome. Its subcellular location is the multivesicular body. Functionally, APOE is an apolipoprotein, a protein associating with lipid particles, that mainly functions in lipoprotein-mediated lipid transport between organs via the plasma and interstitial fluids. APOE is a core component of plasma lipoproteins and is involved in their production, conversion and clearance. Apolipoproteins are amphipathic molecules that interact both with lipids of the lipoprotein particle core and the aqueous environment of the plasma. As such, APOE associates with chylomicrons, chylomicron remnants, very low density lipoproteins (VLDL) and intermediate density lipoproteins (IDL) but shows a preferential binding to high-density lipoproteins (HDL). It also binds a wide range of cellular receptors including the LDL receptor/LDLR, the LDL receptor-related proteins LRP1, LRP2 and LRP8 and the very low-density lipoprotein receptor/VLDLR that mediate the cellular uptake of the APOE-containing lipoprotein particles. Finally, APOE also has a heparin-binding activity and binds heparan-sulfate proteoglycans on the surface of cells, a property that supports the capture and the receptor-mediated uptake of APOE-containing lipoproteins by cells. A main function of APOE is to mediate lipoprotein clearance through the uptake of chylomicrons, VLDLs, and HDLs by hepatocytes. APOE is also involved in the biosynthesis by the liver of VLDLs as well as their uptake by peripheral tissues ensuring the delivery of triglycerides and energy storage in muscle, heart and adipose tissues. By participating in the lipoprotein-mediated distribution of lipids among tissues, APOE plays a critical role in plasma and tissues lipid homeostasis. APOE is also involved in two steps of reverse cholesterol transport, the HDLs-mediated transport of cholesterol from peripheral tissues to the liver, and thereby plays an important role in cholesterol homeostasis. First, it is functionally associated with ABCA1 in the biogenesis of HDLs in tissues. Second, it is enriched in circulating HDLs and mediates their uptake by hepatocytes. APOE also plays an important role in lipid transport in the central nervous system, regulating neuron survival and sprouting. The sequence is that of Apolipoprotein E (APOE) from Erethizon dorsatum (North American porcupine).